Here is a 198-residue protein sequence, read N- to C-terminus: ATP-dependent Clp protease proteolytic subunit (198 aa).

Residue Ser103 is the Nucleophile of the active site. The active site involves His128.

Belongs to the peptidase S14 family. Fourteen ClpP subunits assemble into 2 heptameric rings which stack back to back to give a disk-like structure with a central cavity, resembling the structure of eukaryotic proteasomes.

It localises to the cytoplasm. The catalysed reaction is Hydrolysis of proteins to small peptides in the presence of ATP and magnesium. alpha-casein is the usual test substrate. In the absence of ATP, only oligopeptides shorter than five residues are hydrolyzed (such as succinyl-Leu-Tyr-|-NHMec, and Leu-Tyr-Leu-|-Tyr-Trp, in which cleavage of the -Tyr-|-Leu- and -Tyr-|-Trp bonds also occurs).. Functionally, cleaves peptides in various proteins in a process that requires ATP hydrolysis. Has a chymotrypsin-like activity. Plays a major role in the degradation of misfolded proteins. The chain is ATP-dependent Clp protease proteolytic subunit from Vesicomyosocius okutanii subsp. Calyptogena okutanii (strain HA).